Reading from the N-terminus, the 805-residue chain is MTNEEPVPSTSSVLSAAEKNVKIETPSRKRKGLDIDALWRKKFKDVENQKSPEKSEKSEKTIKEEPLETHPSGERKLRSASKDSKSLSKETHNTISTRSSSSGTPRKKMEPEDVKPNIKMLKKSLPVSFQCSNLNDGTVGDASVMLDPTKISLHSSSVAYGEESQDEMEVIQHSTDDPNGTREEFDYNQIEYGNAVTPNGTYTLYAPDSNYAPYYQYSNNMQSSPQDNAPYLVPAPQSPVSIDDADSINLPNNQRASPATVNWLFENYEIGEGSLPRCELYDHYKKHCAEHRMDPVNAASFGKLIRSVFHNLKTRRLGTRGNSKYHYYGIRLKDSSTLHSMQHPQPQIIQNTYTPPMQLPQRDAYADTVNQVAAIKYMDVEIPDKRARKDNSSSSSSCRDSVSPCMDLPAQQTIQHTPVHSVIPSTQQPAPLHNNNVVSYVVTESDKAAMGKIDLPIVPFPDKDALMATIGFRKLGVGEEELNSLIDIYEILCREILALIKNIDFASVEDTWSKFWSGNFGVDRDHISALCTLDQVQDYIIEVDLALYQTIVDTLIPNVLLSELSTGMTQTCRTFAKNIDVYLRKSLMLANLGEFFVKKKIQAIKYLQQGLKRYTSLNHLAHASRGVLMKPEQVQQMYQDYIRVDINTVHQQAGWICGCDSVMVHHVNNAFKHNLQRMSAMEVWAEWLESIVDQVLAKYHDKPANVIANVGKQFLLNWSFYTSMIIRDLTLRSAMSFGSFTLIRLLADDYMYYLIESKIAKAGKQQLITVIRADKDWPLTTNPQEYIVVANDNDEDLDLEKAGLL.

A compositionally biased stretch (polar residues) spans 1-14 (MTNEEPVPSTSSVL). The segment at 1–113 (MTNEEPVPST…TPRKKMEPED (113 aa)) is disordered. Positions 19 to 92 (KNVKIETPSR…DSKSLSKETH (74 aa)) are enriched in basic and acidic residues. Residues 93–104 (NTISTRSSSSGT) are compositionally biased toward polar residues. The segment at residues 260-334 (TVNWLFENYE…YHYYGIRLKD (75 aa)) is a DNA-binding region (RFX-type winged-helix).

This sequence belongs to the RFX family. Ciliated sensory neurons. As to expression, expressed in the male tail HOB and RnB neurons but not in male-specific CEM head neurons or other ciliated neurons.

It is found in the nucleus. Functionally, probable transcription factor. May regulate some genes of ciliated sensory neurons. May activate the expression of the shared components of sensory cilia, but not the cell-type-specific expression. Together with transcription factor atf-7, involved in regulation of the serotonergic response of ADF neurons to pathogenic food. In terms of biological role, involved in male mating behavior; may play a role in functional specialization of PKD ciliated sensory neurons. The protein is RFX-like transcription factor daf-19 of Caenorhabditis elegans.